We begin with the raw amino-acid sequence, 511 residues long: Glutamyl-tRNA(Gln) amidotransferase subunit B, mitochondrial (511 aa).

A mitochondrion-targeting transit peptide spans 1 to 6 (MLRRYL).

This sequence belongs to the GatB/GatE family. GatB subfamily. As to quaternary structure, subunit of the heterotrimeric GatFAB amidotransferase (AdT) complex, composed of A, B and F subunits.

The protein localises to the mitochondrion. The catalysed reaction is L-glutamyl-tRNA(Gln) + L-glutamine + ATP + H2O = L-glutaminyl-tRNA(Gln) + L-glutamate + ADP + phosphate + H(+). Its function is as follows. Allows the formation of correctly charged Gln-tRNA(Gln) through the transamidation of misacylated Glu-tRNA(Gln) in the mitochondria. The reaction takes place in the presence of glutamine and ATP through an activated gamma-phospho-Glu-tRNA(Gln). In Lodderomyces elongisporus (strain ATCC 11503 / CBS 2605 / JCM 1781 / NBRC 1676 / NRRL YB-4239) (Yeast), this protein is Glutamyl-tRNA(Gln) amidotransferase subunit B, mitochondrial.